The chain runs to 171 residues: S-ribosylhomocysteine lyase (171 aa).

3 residues coordinate Fe cation: histidine 54, histidine 58, and cysteine 128.

The protein belongs to the LuxS family. Homodimer. It depends on Fe cation as a cofactor.

It catalyses the reaction S-(5-deoxy-D-ribos-5-yl)-L-homocysteine = (S)-4,5-dihydroxypentane-2,3-dione + L-homocysteine. Its function is as follows. Involved in the synthesis of autoinducer 2 (AI-2) which is secreted by bacteria and is used to communicate both the cell density and the metabolic potential of the environment. The regulation of gene expression in response to changes in cell density is called quorum sensing. Catalyzes the transformation of S-ribosylhomocysteine (RHC) to homocysteine (HC) and 4,5-dihydroxy-2,3-pentadione (DPD). The protein is S-ribosylhomocysteine lyase of Shigella flexneri.